The sequence spans 577 residues: Signal peptide peptidase-like 2B (577 aa).

Residues 1-19 form the signal peptide; the sequence is MAAARLAASLLLLAAQVAC. Residues 20–168 are Lumenal-facing; that stretch reads EFGVLRVVPQ…APSEPVMDYN (149 aa). The 101-residue stretch at 49–149 folds into the PA domain; it reads LPHDLNKVSL…RDLQDIFRRF (101 aa). The N-linked (GlcNAc...) asparagine glycan is linked to Asn-91. A helical transmembrane segment spans residues 169-189; it reads MVIIFIMAVGTVALGGYWAGS. At 190–216 the chain is on the cytoplasmic side; it reads HDVKKYMKHKRDDVPEKQEDEAVDVTP. Residues 217 to 237 traverse the membrane as a helical segment; sequence VMICVFVVMCCFMLVLLYYFY. Topologically, residues 238–239 are lumenal; that stretch reads DR. A helical membrane pass occupies residues 240 to 260; sequence LVYVIIGIFCLASSTGLYSCL. The Cytoplasmic segment spans residues 261 to 286; sequence APCVRKLPFCTCRVPDNNLPYFHKRP. A helical membrane pass occupies residues 287-307; the sequence is QARMLLLALFCVTVSVVWGVF. At 308 to 312 the chain is on the lumenal side; sequence RNEDQ. A helical membrane pass occupies residues 313–333; it reads WAWVLQDTLGIAFCLYMLRTI. Topologically, residues 334 to 341 are cytoplasmic; the sequence is RLPTFKAC. Residues 342–362 traverse the membrane as a helical segment; that stretch reads TLLLLVLFVYDIFFVFITPYL. Asp-352 is a catalytic residue. Over 363–405 the chain is Lumenal; that stretch reads TKSGNSIMVEVATGPSNSSTHEKLPMVLKVPRLNTSPLSLCDR. Residues 406 to 426 form a helical membrane-spanning segment; the sequence is PFSLLGFGDILVPGLLVAYCH. Asp-414 is a catalytic residue. Topologically, residues 427-438 are cytoplasmic; the sequence is RFDIQVQSSRIY. Residues 439 to 459 traverse the membrane as a helical segment; it reads FVACTIAYGLGLLVTFVALVL. Over 460–463 the chain is Lumenal; the sequence is MRHG. A helical membrane pass occupies residues 464-484; the sequence is QPALLYLVPCTLLTSCTVALW. The short motif at 465–467 is the PAL element; the sequence is PAL. Topologically, residues 485-577 are cytoplasmic; sequence RREMGAFWTG…IPVVTPGTSA (93 aa). The disordered stretch occupies residues 502 to 577; it reads QTPWAAPQGP…IPVVTPGTSA (76 aa).

The protein belongs to the peptidase A22B family. Monomer. Homodimer. Interacts with ITM2B and TNF. In terms of processing, glycosylated.

It is found in the cell membrane. It localises to the golgi apparatus membrane. The protein resides in the lysosome membrane. Its subcellular location is the endosome membrane. The protein localises to the membrane. Its function is as follows. Intramembrane-cleaving aspartic protease (I-CLiP) that cleaves type II membrane signal peptides in the hydrophobic plane of the membrane. Functions in ITM2B and TNF processing. Catalyzes the intramembrane cleavage of the anchored fragment of shed TNF-alpha (TNF), which promotes the release of the intracellular domain (ICD) for signaling to the nucleus. May play a role in the regulation of innate and adaptive immunity. The sequence is that of Signal peptide peptidase-like 2B from Rattus norvegicus (Rat).